The following is a 122-amino-acid chain: Large ribosomal subunit protein uL14c (122 aa).

The protein belongs to the universal ribosomal protein uL14 family. Part of the 50S ribosomal subunit.

It is found in the plastid. It localises to the chloroplast. Functionally, binds to 23S rRNA. The protein is Large ribosomal subunit protein uL14c of Pinus koraiensis (Korean pine).